Reading from the N-terminus, the 272-residue chain is Universal stress protein MT2699 (272 aa).

ATP contacts are provided by residues G15, 109-115 (GSVGIGR), and 123-124 (ST).

Belongs to the universal stress protein A family.

This is Universal stress protein MT2699 from Mycobacterium tuberculosis (strain CDC 1551 / Oshkosh).